Here is a 338-residue protein sequence, read N- to C-terminus: Glycerol-3-phosphate dehydrogenase [NAD(P)+] (338 aa).

NADPH contacts are provided by serine 18, tyrosine 19, histidine 39, and lysine 113. 3 residues coordinate sn-glycerol 3-phosphate: lysine 113, glycine 142, and threonine 144. Alanine 146 is an NADPH binding site. The sn-glycerol 3-phosphate site is built by lysine 198, aspartate 251, serine 261, arginine 262, and asparagine 263. Lysine 198 functions as the Proton acceptor in the catalytic mechanism. Arginine 262 lines the NADPH pocket. Residues valine 286 and glutamate 288 each coordinate NADPH.

This sequence belongs to the NAD-dependent glycerol-3-phosphate dehydrogenase family.

Its subcellular location is the cytoplasm. It catalyses the reaction sn-glycerol 3-phosphate + NAD(+) = dihydroxyacetone phosphate + NADH + H(+). It carries out the reaction sn-glycerol 3-phosphate + NADP(+) = dihydroxyacetone phosphate + NADPH + H(+). Its pathway is membrane lipid metabolism; glycerophospholipid metabolism. Functionally, catalyzes the reduction of the glycolytic intermediate dihydroxyacetone phosphate (DHAP) to sn-glycerol 3-phosphate (G3P), the key precursor for phospholipid synthesis. The chain is Glycerol-3-phosphate dehydrogenase [NAD(P)+] from Photobacterium profundum (strain SS9).